The chain runs to 99 residues: Aspartyl/glutamyl-tRNA(Asn/Gln) amidotransferase subunit C (99 aa).

This sequence belongs to the GatC family. In terms of assembly, heterotrimer of A, B and C subunits.

The enzyme catalyses L-glutamyl-tRNA(Gln) + L-glutamine + ATP + H2O = L-glutaminyl-tRNA(Gln) + L-glutamate + ADP + phosphate + H(+). The catalysed reaction is L-aspartyl-tRNA(Asn) + L-glutamine + ATP + H2O = L-asparaginyl-tRNA(Asn) + L-glutamate + ADP + phosphate + 2 H(+). Allows the formation of correctly charged Asn-tRNA(Asn) or Gln-tRNA(Gln) through the transamidation of misacylated Asp-tRNA(Asn) or Glu-tRNA(Gln) in organisms which lack either or both of asparaginyl-tRNA or glutaminyl-tRNA synthetases. The reaction takes place in the presence of glutamine and ATP through an activated phospho-Asp-tRNA(Asn) or phospho-Glu-tRNA(Gln). The chain is Aspartyl/glutamyl-tRNA(Asn/Gln) amidotransferase subunit C from Burkholderia thailandensis (strain ATCC 700388 / DSM 13276 / CCUG 48851 / CIP 106301 / E264).